Here is a 464-residue protein sequence, read N- to C-terminus: uncharacterized protein (464 aa).

2 disordered regions span residues 290 to 374 and 445 to 464; these read YRKQ…ERPK and ETDDEDEENQYSEAEKPLEE. Low complexity predominate over residues 293–302; sequence QQQWQQQQQQ. Positions 303-318 are enriched in basic residues; sequence RKVKTPIKKQEAKKKA. Residues 352 to 367 are compositionally biased toward polar residues; the sequence is DMKQQQQMEKGTTSKQ. Residues 445–454 show a composition bias toward acidic residues; sequence ETDDEDEENQ.

This is an uncharacterized protein from Macaca fascicularis (Crab-eating macaque).